The sequence spans 324 residues: Thiamine thiazole synthase (324 aa).

Substrate contacts are provided by residues C86, 107–108 (EA), G115, and V180. C213 carries the 2,3-didehydroalanine (Cys) modification. Substrate contacts are provided by residues D215, H230, M282, and 292–294 (RMG).

The protein belongs to the THI4 family. In terms of assembly, homooctamer. Fe cation serves as cofactor. Post-translationally, during the catalytic reaction, a sulfide is transferred from Cys-213 to a reaction intermediate, generating a dehydroalanine residue.

The protein resides in the cytoplasm. It is found in the nucleus. The enzyme catalyses [ADP-thiazole synthase]-L-cysteine + glycine + NAD(+) = [ADP-thiazole synthase]-dehydroalanine + ADP-5-ethyl-4-methylthiazole-2-carboxylate + nicotinamide + 3 H2O + 2 H(+). Its function is as follows. Involved in biosynthesis of the thiamine precursor thiazole. Catalyzes the conversion of NAD and glycine to adenosine diphosphate 5-(2-hydroxyethyl)-4-methylthiazole-2-carboxylic acid (ADT), an adenylated thiazole intermediate. The reaction includes an iron-dependent sulfide transfer from a conserved cysteine residue of the protein to a thiazole intermediate. The enzyme can only undergo a single turnover, which suggests it is a suicide enzyme. May have additional roles in adaptation to various stress conditions and in DNA damage tolerance. This is Thiamine thiazole synthase (sti35) from Fusarium solani subsp. phaseoli (Nectria haematococca).